Consider the following 769-residue polypeptide: Calcium up-regulated protein B (769 aa).

Residues 1–22 (MINIEDISKSSNQSEEKQLKST) are disordered. Ricin B-type lectin domains are found at residues 25–145 (KPKY…WTTF) and 158–296 (FQSK…WITN).

Belongs to the cup family.

The protein resides in the cytoplasm. Its subcellular location is the membrane. Its function is as follows. May play an important role in stabilizing and/or regulating the cell membrane during Ca(2+) stress or certain stages of development. The sequence is that of Calcium up-regulated protein B (cupB) from Dictyostelium discoideum (Social amoeba).